The sequence spans 485 residues: Glutamyl-tRNA(Gln) amidotransferase subunit A (485 aa).

Active-site charge relay system residues include Lys79 and Ser154. Ser178 acts as the Acyl-ester intermediate in catalysis.

The protein belongs to the amidase family. GatA subfamily. Heterotrimer of A, B and C subunits.

It catalyses the reaction L-glutamyl-tRNA(Gln) + L-glutamine + ATP + H2O = L-glutaminyl-tRNA(Gln) + L-glutamate + ADP + phosphate + H(+). Functionally, allows the formation of correctly charged Gln-tRNA(Gln) through the transamidation of misacylated Glu-tRNA(Gln) in organisms which lack glutaminyl-tRNA synthetase. The reaction takes place in the presence of glutamine and ATP through an activated gamma-phospho-Glu-tRNA(Gln). In Persephonella marina (strain DSM 14350 / EX-H1), this protein is Glutamyl-tRNA(Gln) amidotransferase subunit A.